Here is a 715-residue protein sequence, read N- to C-terminus: Lactococcin transport/processing ATP-binding protein LcnC-like (715 aa).

The region spanning 11-138 is the Peptidase C39 domain; the sequence is QVDEMDCGCA…SEWTGISLFL (128 aa). Cys-17 is a catalytic residue. A run of 5 helical transmembrane segments spans residues 167–187, 197–217, 237–257, 282–302, and 307–327; these read VILNIVIASFIVTLINILGSY, IPNALMGTLGIISVGLLLTYI, LAIDVILSYIRHIFQLPMSFF, TILSLFLDLTIVLMTGLILGL, and LFLLVLLAIPLYIVVIIIFTP. One can recognise an ABC transmembrane type-1 domain in the interval 168–450; that stretch reads ILNIVIASFI…IINLQTKLQK (283 aa). An ABC transporter domain is found at 482-715; sequence LNMSEISYQY…NGFYAQLYHN (234 aa). Residue 515 to 522 coordinates ATP; sequence GISGSGKS.

The protein belongs to the ABC transporter superfamily. HlyB family.

Its subcellular location is the cell membrane. Its function is as follows. Involved in the export process of a bacteriocin lactococcin. This chain is Lactococcin transport/processing ATP-binding protein LcnC-like (lcnC), found in Lactococcus lactis subsp. lactis (strain IL1403) (Streptococcus lactis).